Consider the following 318-residue polypeptide: Cytochrome f (318 aa).

The N-terminal stretch at 1–34 is a signal peptide; sequence MKNNYLANLIKTLQAIVVSVALLAPLVLPSAVNA. The heme site is built by Phe35, Cys55, Cys58, and His59. The helical transmembrane segment at 284 to 304 threads the bilayer; that stretch reads VKGLIAFFFTVILAQILLVLK.

This sequence belongs to the cytochrome f family. The 4 large subunits of the cytochrome b6-f complex are cytochrome b6, subunit IV (17 kDa polypeptide, petD), cytochrome f and the Rieske protein, while the 4 small subunits are PetG, PetL, PetM and PetN. The complex functions as a dimer. It depends on heme as a cofactor.

The protein resides in the plastid. It localises to the chloroplast thylakoid membrane. Its function is as follows. Component of the cytochrome b6-f complex, which mediates electron transfer between photosystem II (PSII) and photosystem I (PSI), cyclic electron flow around PSI, and state transitions. The sequence is that of Cytochrome f from Rhodomonas salina (Cryptomonas salina).